The chain runs to 226 residues: Glycerol-3-phosphate acyltransferase (226 aa).

6 helical membrane-spanning segments follow: residues 1–21 (MGLW…LGSF), 56–76 (GPGA…IALV), 102–122 (LVTL…FLGF), 134–154 (ILLA…AVVV), 159–178 (IVSL…MVVL), and 182–197 (LPYI…YVIL).

It belongs to the PlsY family. As to quaternary structure, probably interacts with PlsX.

The protein resides in the cell inner membrane. It catalyses the reaction an acyl phosphate + sn-glycerol 3-phosphate = a 1-acyl-sn-glycero-3-phosphate + phosphate. Its pathway is lipid metabolism; phospholipid metabolism. Its function is as follows. Catalyzes the transfer of an acyl group from acyl-phosphate (acyl-PO(4)) to glycerol-3-phosphate (G3P) to form lysophosphatidic acid (LPA). This enzyme utilizes acyl-phosphate as fatty acyl donor, but not acyl-CoA or acyl-ACP. This chain is Glycerol-3-phosphate acyltransferase, found in Trichormus variabilis (strain ATCC 29413 / PCC 7937) (Anabaena variabilis).